Reading from the N-terminus, the 119-residue chain is Ribonuclease P protein component (119 aa).

Belongs to the RnpA family. In terms of assembly, consists of a catalytic RNA component (M1 or rnpB) and a protein subunit.

It catalyses the reaction Endonucleolytic cleavage of RNA, removing 5'-extranucleotides from tRNA precursor.. Functionally, RNaseP catalyzes the removal of the 5'-leader sequence from pre-tRNA to produce the mature 5'-terminus. It can also cleave other RNA substrates such as 4.5S RNA. The protein component plays an auxiliary but essential role in vivo by binding to the 5'-leader sequence and broadening the substrate specificity of the ribozyme. The polypeptide is Ribonuclease P protein component (Bacillus cereus (strain ATCC 14579 / DSM 31 / CCUG 7414 / JCM 2152 / NBRC 15305 / NCIMB 9373 / NCTC 2599 / NRRL B-3711)).